We begin with the raw amino-acid sequence, 1429 residues long: Autophagy-related protein 11 (1429 aa).

4 coiled-coil regions span residues 540–579 (GDDD…QSQA), 616–808 (EGID…LDDH), 842–985 (TLVE…HMNS), and 1106–1135 (RRIK…LQKD). The interval 574–622 (HRQSQASRPGNLFQPQGSQQRERVNSASSVRSSRFDDRRRSSEGIDPLM) is disordered. A compositionally biased stretch (polar residues) spans 575 to 592 (RQSQASRPGNLFQPQGSQ). Residues 606 to 616 (SRFDDRRRSSE) are compositionally biased toward basic and acidic residues. Disordered stretches follow at residues 1205-1224 (SKSL…ENDN) and 1333-1405 (RAHN…PTRR). 2 stretches are compositionally biased toward polar residues: residues 1206–1215 (KSLQPSSETE) and 1333–1362 (RAHN…GQKN). The segment covering 1384–1398 (KADEQPRSVVQREDS) has biased composition (basic and acidic residues).

The protein belongs to the ATG11 family. Homodimer and potential homooligomers. Interacts with ATG1 kinase and the ATG19 and ATG34 cargo protein transporters. Interacts with ATG9, ATG17 and ATG20.

It localises to the preautophagosomal structure membrane. Its subcellular location is the vacuole membrane. Involved in cytoplasm to vacuole transport (Cvt), pexophagy, mitophagy and nucleophagy. Recruits mitochondria for their selective degradation via autophagy (mitophagy) during starvation, through its interaction with ATG32. Works as scaffold proteins that recruit ATG proteins to the pre-autophagosome (PAS), the site of vesicle/autophagosome formation. Required for ATG9 anterograde transport from the mitochondria to the PAS. Also recruits the ATG19-prAPE1 complex to the PAS. Required for the Cvt vesicles completion. Autophagy is required for proper vegetative growth, asexual/sexual reproduction, and full virulence. Autophagy is particularly involved in the biosynthesis of deoxynivalenol (DON), an important virulence determinant. The chain is Autophagy-related protein 11 from Gibberella zeae (strain ATCC MYA-4620 / CBS 123657 / FGSC 9075 / NRRL 31084 / PH-1) (Wheat head blight fungus).